The chain runs to 390 residues: Multidrug resistance protein MdtL (390 aa).

The next 12 helical transmembrane spans lie at 4–24 (FLIC…MYLV), 42–62 (IAFS…GKVA), 69–89 (PVAI…SRAT), 93–113 (LFLT…VVAF), 131–151 (LLNG…HLIM), 158–178 (SLFY…VFIL), 199–221 (LLNR…ILTF), 245–265 (ALTA…LSVF), 269–289 (TLML…SLSS), 293–313 (VTLF…GVAM), 316–336 (ALGP…IAQV), and 353–375 (ALNM…LMTI).

It belongs to the major facilitator superfamily. DHA1 family. MdtL (TC 2.A.1.2.22) subfamily.

The protein localises to the cell inner membrane. The sequence is that of Multidrug resistance protein MdtL from Citrobacter koseri (strain ATCC BAA-895 / CDC 4225-83 / SGSC4696).